Here is a 220-residue protein sequence, read N- to C-terminus: Probable GTP-binding protein EngB (220 aa).

Positions 31 to 205 constitute an EngB-type G domain; it reads AGVEIAFAGR…LGILNEWCHP (175 aa). GTP contacts are provided by residues 39–46, 66–70, 84–87, 151–154, and 184–186; these read GRSNAGKS, GRTQL, DLPG, TKAD, and FSS. Residues Ser46 and Thr68 each contribute to the Mg(2+) site.

It belongs to the TRAFAC class TrmE-Era-EngA-EngB-Septin-like GTPase superfamily. EngB GTPase family. Mg(2+) is required as a cofactor.

Its function is as follows. Necessary for normal cell division and for the maintenance of normal septation. This is Probable GTP-binding protein EngB from Shewanella sediminis (strain HAW-EB3).